A 698-amino-acid chain; its full sequence is Testis-specific gene 10 protein (698 aa).

Ser163 is modified (phosphoserine). Residues 556–689 (QMANERISMQ…SPDRGLDRSL (134 aa)) are interaction with HIF1A. Over residues 659 to 670 (HMSSTMKPNTKC) the composition is skewed to polar residues. Positions 659 to 685 (HMSSTMKPNTKCHSPERAHHRSPDRGL) are disordered. Residues 671-685 (HSPERAHHRSPDRGL) are compositionally biased toward basic and acidic residues. Ser688 carries the post-translational modification Phosphoserine.

The protein belongs to the CEP135/TSGA10 family. Interacts with HIF1A. Post-translationally, processed into N-terminal 27-kDa and C-terminal 55-kDa fragments. Expressed in the testis, in spermatozoa (at protein level). Expressed in actively dividing fetal tissues, including sternum, intestine, limb, kidney and stomach.

It is found in the cytoplasm. The protein localises to the cytoskeleton. The protein resides in the microtubule organizing center. It localises to the centrosome. Its subcellular location is the centriole. Functionally, plays a role in spermatogenesis. When overexpressed, prevents nuclear localization of HIF1A. The chain is Testis-specific gene 10 protein (TSGA10) from Homo sapiens (Human).